Here is a 388-residue protein sequence, read N- to C-terminus: Leucine aminopeptidase 1 (388 aa).

A signal peptide spans M1–A19. A propeptide spanning residues H20–S88 is cleaved from the precursor. The N-linked (GlcNAc...) asparagine glycan is linked to N98. Zn(2+) is bound by residues H187, D206, E245, and D272. The cysteines at positions 321 and 325 are disulfide-linked. Residue H354 coordinates Zn(2+).

The protein belongs to the peptidase M28 family. M28E subfamily. Monomer. Zn(2+) is required as a cofactor.

The protein localises to the secreted. Functionally, extracellular aminopeptidase that allows assimilation of proteinaceous substrates. The chain is Leucine aminopeptidase 1 (LAP1) from Leptosphaeria maculans (strain JN3 / isolate v23.1.3 / race Av1-4-5-6-7-8) (Blackleg fungus).